The primary structure comprises 843 residues: Glycogen phosphorylase, brain form (843 aa).

An N-acetylalanine modification is found at Ala2. Phosphoserine; by PHK; in form phosphorylase A is present on Ser15. Residues Asp43, Tyr197, and Arg310 each coordinate AMP. Tyr197 is subject to Phosphotyrosine. Tyr473 carries the post-translational modification Phosphotyrosine. Lys569 contacts pyridoxal 5'-phosphate. The tract at residues 677 to 678 (TG) is pyridoxal 5'-phosphate. Lys681 carries the post-translational modification N6-(pyridoxal phosphate)lysine.

Belongs to the glycogen phosphorylase family. In terms of assembly, homodimer. Dimers associate into a tetramer to form the enzymatically active phosphorylase A. The cofactor is pyridoxal 5'-phosphate. Post-translationally, phosphorylation of Ser-15 converts phosphorylase B (unphosphorylated) to phosphorylase A.

The enzyme catalyses [(1-&gt;4)-alpha-D-glucosyl](n) + phosphate = [(1-&gt;4)-alpha-D-glucosyl](n-1) + alpha-D-glucose 1-phosphate. Activity of phosphorylase is controlled both by allosteric means (through the non-covalent binding of metabolites) and by covalent modification. Thus AMP allosterically activates, whereas ATP, ADP, and glucose-6-phosphate allosterically inhibit, phosphorylase B. In terms of biological role, glycogen phosphorylase that regulates glycogen mobilization. Phosphorylase is an important allosteric enzyme in carbohydrate metabolism. Enzymes from different sources differ in their regulatory mechanisms and in their natural substrates. However, all known phosphorylases share catalytic and structural properties. This Pongo abelii (Sumatran orangutan) protein is Glycogen phosphorylase, brain form (PYGB).